The sequence spans 532 residues: Nucleobase-ascorbate transporter 6 (532 aa).

A disordered region spans residues 1-24; the sequence is MAGGGAPAPKADEPQPHPPKDQLP. Residues 10-20 are compositionally biased toward basic and acidic residues; the sequence is KADEPQPHPPK. The next 12 membrane-spanning stretches (helical) occupy residues 39–59, 75–95, 97–117, 137–157, 163–185, 192–212, 223–243, 289–309, 361–381, 392–414, 426–446, and 463–483; these read AILLGFQHYLVMLGTTVLIPT, VIQTILFVAGINTLLQTLFGT, LPAVVGASYTFVPTTISIILS, TQGALIVASTLQMILGFSGLW, FLSPISAVPLVGLVGFGLYEFGF, IEIGLPELLILVFVSQYLPHV, FAVIFAVVIVWIYAHLLTVGG, FAMMMASFVALVESTGAFVAV, VGSRRVVQIAAGFMIFFSILG, APIIAALYCLFFAYVGAGGLSFL, FILGFSVFLGLSIPQYFNEYT, and DMVNVPFSSEPFVAGSVAFFL.

This sequence belongs to the nucleobase:cation symporter-2 (NCS2) (TC 2.A.40) family. Expressed in the apical region of cotyledons 4 days after imbibition (DAI). Expressed in the whole vasculature at 12 DAI. Expressed in the root central cylinder and lateral root primordia. Expressed in the vasculature of sepals, filaments, carpels and developing siliques.

The protein localises to the membrane. In Arabidopsis thaliana (Mouse-ear cress), this protein is Nucleobase-ascorbate transporter 6 (NAT6).